The chain runs to 177 residues: von Ebner gland protein 2 (177 aa).

The N-terminal stretch at 1–18 (MKALLLTFSLSLLAALQA) is a signal peptide. Cys80 and Cys172 are joined by a disulfide.

This sequence belongs to the calycin superfamily. Lipocalin family. Homodimer.

The protein resides in the secreted. Functionally, could play a role in taste reception. Could be necessary for the concentration and delivery of sapid molecules in the gustatory system. The chain is von Ebner gland protein 2 (Vegp2) from Rattus norvegicus (Rat).